Reading from the N-terminus, the 187-residue chain is Large ribosomal subunit protein bL25 (187 aa).

Belongs to the bacterial ribosomal protein bL25 family. CTC subfamily. As to quaternary structure, part of the 50S ribosomal subunit; part of the 5S rRNA/L5/L18/L25 subcomplex. Contacts the 5S rRNA. Binds to the 5S rRNA independently of L5 and L18.

Its function is as follows. This is one of the proteins that binds to the 5S RNA in the ribosome where it forms part of the central protuberance. The polypeptide is Large ribosomal subunit protein bL25 (Tropheryma whipplei (strain TW08/27) (Whipple's bacillus)).